Consider the following 97-residue polypeptide: Acylphosphatase (97 aa).

Residues 7-97 (RLTAWVHGHV…QERFEGFVER (91 aa)) form the Acylphosphatase-like domain. Catalysis depends on residues arginine 22 and asparagine 40.

It belongs to the acylphosphatase family.

The enzyme catalyses an acyl phosphate + H2O = a carboxylate + phosphate + H(+). The sequence is that of Acylphosphatase (acyP) from Mycobacterium avium (strain 104).